Here is a 495-residue protein sequence, read N- to C-terminus: PXA domain protein 1 (495 aa).

Positions 1–174 (MAKLSSLLNP…KFIIYLSKAI (174 aa)) constitute a PXA domain. 2 consecutive transmembrane segments (helical) span residues 7–27 (LLNP…YSGI) and 235–255 (WFFF…FVAE). Composition is skewed to polar residues over residues 402-419 (AVSS…QRSF) and 427-436 (DSQTPSENSA). The interval 402–436 (AVSSPTKANTNKSHQRSFSIPKATKDSQTPSENSA) is disordered. A helical membrane pass occupies residues 446-466 (AYSQIPVIPFFLPSDKLIMLV).

The protein localises to the endosome membrane. In terms of biological role, required for required for normal vacuolar morphology and for vacuolar protein transport. Also required for endosome-to-Golgi protein transport. The protein is PXA domain protein 1 (pxa1) of Schizosaccharomyces pombe (strain 972 / ATCC 24843) (Fission yeast).